A 97-amino-acid chain; its full sequence is Large ribosomal subunit protein uL23 (97 aa).

This sequence belongs to the universal ribosomal protein uL23 family. Part of the 50S ribosomal subunit. Contacts protein L29, and trigger factor when it is bound to the ribosome.

Its function is as follows. One of the early assembly proteins it binds 23S rRNA. One of the proteins that surrounds the polypeptide exit tunnel on the outside of the ribosome. Forms the main docking site for trigger factor binding to the ribosome. The polypeptide is Large ribosomal subunit protein uL23 (Bartonella henselae (strain ATCC 49882 / DSM 28221 / CCUG 30454 / Houston 1) (Rochalimaea henselae)).